Here is a 1093-residue protein sequence, read N- to C-terminus: Synaptopodin-2 (1093 aa).

Residues 1–180 (MGTGDFICIS…PDSQRGRVAE (180 aa)) are interaction with VPS18. The PDZ domain occupies 6 to 88 (FICISMTGGA…SLQMLIKRPS (83 aa)). Disordered regions lie at residues 144–174 (ENQR…PDSQ) and 211–233 (ASGP…DPNL). Residues 222–233 (EKSKSPDPDPNL) are compositionally biased toward basic and acidic residues. Phosphoserine is present on residues Ser274, Ser310, Ser329, and Ser330. Positions 329–369 (SSEGTEQGEDPRSEKDHSRPHKHRARHARLRRSESLSEKQV) are disordered. Thr333 bears the Phosphothreonine mark. Over residues 346–358 (SRPHKHRARHARL) the composition is skewed to basic residues. Positions 359–369 (RRSESLSEKQV) are enriched in basic and acidic residues. Residues 398 to 406 (KKRRRRARK) carry the Nuclear localization signal motif. Interaction with ACTN2 regions lie at residues 481–663 (MEML…FYDS), 664–924 (SERI…PPVA), and 901–1093 (QSPT…VVEE). Disordered regions lie at residues 507 to 803 (AQKE…GTVV) and 834 to 870 (AVAS…GMSG). F-actin binding regions lie at residues 534-663 (TSYQ…FYDS) and 664-803 (SERI…GTVV). Residues Ser548, Ser549, and Ser551 each carry the phosphoserine modification. 2 stretches are compositionally biased toward polar residues: residues 565–579 (PQQN…TANI) and 595–611 (SVNQ…NMTS). Ser604 carries the phosphoserine modification. The segment at 607 to 811 (RNMTSPIADF…VVSSIKIAQP (205 aa)) is interaction with YWHAB. Position 610 is a phosphothreonine (Thr610). Position 611 is a phosphoserine (Ser611). Residues 615–626 (DFPAPPPYSAVT) form an interaction with BAG3 region. Composition is skewed to pro residues over residues 617 to 630 (PAPP…PPPD) and 644 to 655 (AQPPPWPQPAPW). The PPPY motif signature appears at 619 to 622 (PPPY). A Phosphotyrosine modification is found at Tyr622. Thr626 is modified (phosphothreonine). Basic and acidic residues predominate over residues 663–674 (SSERIASRDERI). The interval 664–916 (SERIASRDER…LPASWKYSSN (253 aa)) is F-actin bundling activity. Phosphoserine occurs at positions 705 and 729. The actin binding stretch occupies residues 751-900 (AKQKTPPPVA…DTVQAHAARA (150 aa)). 2 positions are modified to phosphothreonine: Thr755 and Thr774. Residues 762–784 (KPAVKSSSSQPVTPVSPVWSPGV) are compositionally biased toward low complexity. Phosphoserine is present on residues Ser777 and Ser781. 2 stretches are compositionally biased toward polar residues: residues 793-803 (PTSNPSKGTVV) and 835-853 (VASQ…TVNA). The interaction with FLNC stretch occupies residues 810-1093 (QPSYPPARPA…QVWKPSVVEE (284 aa)). Residues Ser902, Ser906, and Ser910 each carry the phosphoserine modification. Residues 937–956 (ALKSQPSAAQPSKMGKKKGK) are disordered. The interval 1000 to 1019 (LAMKQALPPRPVNAASPTNV) is interaction with ZYX. The residue at position 1015 (Ser1015) is a Phosphoserine. A compositionally biased stretch (low complexity) spans 1041–1050 (SSPVSASPVP). The disordered stretch occupies residues 1041–1064 (SSPVSASPVPVGIPTSPKQESASS). At Ser1056 the chain carries Phosphoserine.

Belongs to the synaptopodin family. As to quaternary structure, may self-associate in muscle cells under oxidative stress. Binds F-actin. Interacts with ACTN2; ACTN2 is proposed to anchor SYOP2 at Z lines in mature myocytes. Interacts with AKAP6, PPP3CA and CAMK2A. Interacts (phosphorylated form) with YWHAB; YWHAB competes with ACTN2 for interaction with SYNPO2. Interacts with KPNA2; mediating nuclear import of SYNOP2; dependent on interaction with YWHAB. Interacts with IPO13; may be implicated in SYNOP2 nuclear import. Interacts with ZYX, FLNC, ILK. Interacts with BAG3 (via WW 1 domain). May associate with the CASA complex consisting of HSPA8, HSPB8 and BAG3. Interacts with VPS18. Phosphorylated by PKA, and by CaMK2 at multiple sites. Dephosphorylated by calcineurin; abrogating interaction with YWHAB and impairing nuclear import. Phosphorylated by ILK. In terms of tissue distribution, expressed in heart muscle. Isoform 5 is specifically expressed in skeletal muscle.

It localises to the nucleus. The protein localises to the cytoplasm. Its subcellular location is the cytoskeleton. It is found in the myofibril. The protein resides in the sarcomere. It localises to the z line. The protein localises to the cell junction. Its subcellular location is the focal adhesion. Has an actin-binding and actin-bundling activity. Can induce the formation of F-actin networks in an isoform-specific manner. At the sarcomeric Z lines is proposed to act as adapter protein that links nascent myofibers to the sarcolemma via ZYX and may play a role in early assembly and stabilization of the Z lines. Involved in autophagosome formation. May play a role in chaperone-assisted selective autophagy (CASA) involved in Z lines maintenance in striated muscle under mechanical tension; may link the client-processing CASA chaperone machinery to a membrane-tethering and fusion complex providing autophagosome membranes. Involved in regulation of cell migration. May be a tumor suppressor. In terms of biological role, involved in regulation of cell migration. Can induce formation of thick, irregular actin bundles in the cell body. Functionally, involved in regulation of cell migration. Can induce long, well-organized actin bundles frequently orientated in parallel along the long axis of the cell showing characteristics of contractile ventral stress fibers. Its function is as follows. Involved in regulation of cell migration. Can induce an amorphous actin meshwork throughout the cell body containing a mixture of long and short, randomly organized thick and thin actin bundles. Can induce long, well-organized actin bundles frequently orientated in parallel along the long axis of the cell showing characteristics of contractile ventral stress fibers. In terms of biological role, involved in regulation of cell migration in part dependent on the Rho-ROCK cascade; can promote formation of nascent focal adhesions, actin bundles at the leading cell edge and lamellipodia. Can induce formation of thick, irregular actin bundles in the cell body; the induced actin network is associated with enhanced cell migration in vitro. This chain is Synaptopodin-2 (SYNPO2), found in Homo sapiens (Human).